The primary structure comprises 489 residues: Probable cytochrome P450 CYP44 (489 aa).

Residues 12–31 (VEKCPYSPTSSPNTPPRTFS) form a disordered region. Residues 16–29 (PYSPTSSPNTPPRT) show a composition bias toward low complexity. A heme-binding site is contributed by Cys-438.

This sequence belongs to the cytochrome P450 family. It depends on heme as a cofactor.

Cytochromes P450 are a group of heme-thiolate monooxygenases. They oxidize a variety of structurally unrelated compounds, including steroids, fatty acids, and xenobiotics. The polypeptide is Probable cytochrome P450 CYP44 (cyp-44A1) (Caenorhabditis elegans).